The following is a 689-amino-acid chain: DNA-directed RNA polymerase subunit beta' (689 aa).

Residues cysteine 69, cysteine 71, cysteine 87, and cysteine 90 each contribute to the Zn(2+) site. Mg(2+) contacts are provided by aspartate 489, aspartate 491, and aspartate 493.

The protein belongs to the RNA polymerase beta' chain family. RpoC1 subfamily. As to quaternary structure, in plastids the minimal PEP RNA polymerase catalytic core is composed of four subunits: alpha, beta, beta', and beta''. When a (nuclear-encoded) sigma factor is associated with the core the holoenzyme is formed, which can initiate transcription. The cofactor is Mg(2+). Zn(2+) serves as cofactor.

The protein resides in the plastid. It localises to the chloroplast. It catalyses the reaction RNA(n) + a ribonucleoside 5'-triphosphate = RNA(n+1) + diphosphate. DNA-dependent RNA polymerase catalyzes the transcription of DNA into RNA using the four ribonucleoside triphosphates as substrates. This is DNA-directed RNA polymerase subunit beta' from Helianthus annuus (Common sunflower).